The following is a 222-amino-acid chain: Glutathione S-transferase A4 (222 aa).

Methionine 1 carries the post-translational modification N-acetylmethionine. Positions 3–83 (TKPKLHYPNG…YIADKHHLFG (81 aa)) constitute a GST N-terminal domain. Glutathione contacts are provided by residues tyrosine 9, 54 to 55 (QV), and 67 to 68 (QT). In terms of domain architecture, GST C-terminal spans 85-208 (DLKERTLIDM…EPGSKKKPPP (124 aa)).

It belongs to the GST superfamily. Alpha family. In terms of assembly, homodimer.

The protein resides in the cytoplasm. It catalyses the reaction RX + glutathione = an S-substituted glutathione + a halide anion + H(+). Its function is as follows. Conjugation of reduced glutathione to a wide number of exogenous and endogenous hydrophobic electrophiles. The chain is Glutathione S-transferase A4 (GSTA4) from Bos taurus (Bovine).